The chain runs to 143 residues: Putative pre-16S rRNA nuclease (143 aa).

The protein belongs to the YqgF nuclease family.

It localises to the cytoplasm. Functionally, could be a nuclease involved in processing of the 5'-end of pre-16S rRNA. In Lactococcus lactis subsp. lactis (strain IL1403) (Streptococcus lactis), this protein is Putative pre-16S rRNA nuclease (ybeB).